The chain runs to 75 residues: Probable pilin MJ0431 (75 aa).

Residues 1–15 (MGKMKILKKLLSKKG) constitute a propeptide that is removed on maturation. Residues 16–24 (QLSMEVGVL) carry the QXSXEXXXL motif.

Post-translationally, the N-terminus is cleaved by the prepilin peptidase EppA, which recognizes the class III signal sequence.

The protein resides in the secreted. It localises to the cell surface. It is found in the fimbrium. This Methanocaldococcus jannaschii (strain ATCC 43067 / DSM 2661 / JAL-1 / JCM 10045 / NBRC 100440) (Methanococcus jannaschii) protein is Probable pilin MJ0431.